The chain runs to 79 residues: Calcium/calmodulin-dependent protein kinase II inhibitor 2 (79 aa).

An inhibitory domain region spans residues 43–69; it reads KRPPKLGQIGRAKRVVIEDDRIDEVLK.

The protein belongs to the CAMK2N family.

The protein localises to the nucleus. It is found in the cytoplasm. Its subcellular location is the cytosol. Potent and specific cellular inhibitor of CaM-kinase II (CAMK2). Traps Ca(2+)/calmodulin on CAMK2. The protein is Calcium/calmodulin-dependent protein kinase II inhibitor 2 (camk2n2) of Xenopus tropicalis (Western clawed frog).